The following is a 105-amino-acid chain: N(4)-acetylcytidine amidohydrolase (105 aa).

Positions 7-93 (TFFERFEHDI…VIAEIYPGLE (87 aa)) constitute an ASCH domain. Lysine 21 (proton acceptor) is an active-site residue. Threonine 24 serves as the catalytic Nucleophile. Glutamate 74 acts as the Proton donor in catalysis.

It belongs to the N(4)-acetylcytidine amidohydrolase family.

The enzyme catalyses N(4)-acetylcytidine + H2O = cytidine + acetate + H(+). It carries out the reaction N(4)-acetyl-2'-deoxycytidine + H2O = 2'-deoxycytidine + acetate + H(+). The catalysed reaction is N(4)-acetylcytosine + H2O = cytosine + acetate + H(+). Functionally, catalyzes the hydrolysis of N(4)-acetylcytidine (ac4C). The protein is N(4)-acetylcytidine amidohydrolase of Shewanella baltica (strain OS185).